The sequence spans 338 residues: Probable tRNA pseudouridine synthase B (338 aa).

Catalysis depends on aspartate 78, which acts as the Nucleophile. The 76-residue stretch at 245 to 320 folds into the PUA domain; sequence LPKIILRDSA…IAASPIRVLM (76 aa).

Belongs to the pseudouridine synthase TruB family. Type 2 subfamily.

The enzyme catalyses uridine(55) in tRNA = pseudouridine(55) in tRNA. Its function is as follows. Could be responsible for synthesis of pseudouridine from uracil-55 in the psi GC loop of transfer RNAs. The protein is Probable tRNA pseudouridine synthase B of Methanosarcina acetivorans (strain ATCC 35395 / DSM 2834 / JCM 12185 / C2A).